Reading from the N-terminus, the 710-residue chain is Early transcription factor 82 kDa subunit (710 aa).

This sequence belongs to the poxviridae VETF large subunit family. Heterodimer of a 70 kDa and a 82 kDa subunit. Part of the early transcription complex composed of ETF, RAP94/OPG109, and the DNA-directed RNA polymerase.

The protein localises to the virion. Functionally, acts with RNA polymerase to initiate transcription from early gene promoters. Is recruited by the RPO-associated protein of 94 kDa RAP94/OPG109 to form the early transcription complex, which also contains the core RNA polymerase. ETF heterodimer binds to early gene promoters. The polypeptide is Early transcription factor 82 kDa subunit (OPG133) (Homo sapiens (Human)).